Reading from the N-terminus, the 195-residue chain is Peptidyl-tRNA hydrolase (195 aa).

Tyrosine 18 contacts tRNA. Histidine 23 serves as the catalytic Proton acceptor. The tRNA site is built by tyrosine 69, asparagine 71, and asparagine 117.

This sequence belongs to the PTH family. Monomer.

The protein localises to the cytoplasm. The catalysed reaction is an N-acyl-L-alpha-aminoacyl-tRNA + H2O = an N-acyl-L-amino acid + a tRNA + H(+). Hydrolyzes ribosome-free peptidyl-tRNAs (with 1 or more amino acids incorporated), which drop off the ribosome during protein synthesis, or as a result of ribosome stalling. Functionally, catalyzes the release of premature peptidyl moieties from peptidyl-tRNA molecules trapped in stalled 50S ribosomal subunits, and thus maintains levels of free tRNAs and 50S ribosomes. This is Peptidyl-tRNA hydrolase from Nitrosomonas eutropha (strain DSM 101675 / C91 / Nm57).